Here is a 203-residue protein sequence, read N- to C-terminus: Cytochrome c oxidase assembly protein CtaG (203 aa).

Topologically, residues 1–16 (MADQQEKDQKLKKQQR) are cytoplasmic. A helical; Signal-anchor for type II membrane protein membrane pass occupies residues 17–39 (SNATIAFACLSFFVCMIGAAYAS). Over 40–203 (VPLYRIFCQV…VKAETPTNGS (164 aa)) the chain is Periplasmic.

The protein belongs to the COX11/CtaG family.

It localises to the cell inner membrane. Exerts its effect at some terminal stage of cytochrome c oxidase synthesis, probably by being involved in the insertion of the copper B into subunit I. The protein is Cytochrome c oxidase assembly protein CtaG of Brucella anthropi (strain ATCC 49188 / DSM 6882 / CCUG 24695 / JCM 21032 / LMG 3331 / NBRC 15819 / NCTC 12168 / Alc 37) (Ochrobactrum anthropi).